The following is a 154-amino-acid chain: 6,7-dimethyl-8-ribityllumazine synthase (154 aa).

Residues F22, 56–58 (AFE), and 80–82 (TVI) contribute to the 5-amino-6-(D-ribitylamino)uracil site. 85–86 (ST) is a (2S)-2-hydroxy-3-oxobutyl phosphate binding site. H88 acts as the Proton donor in catalysis. F113 contributes to the 5-amino-6-(D-ribitylamino)uracil binding site. R127 contacts (2S)-2-hydroxy-3-oxobutyl phosphate.

This sequence belongs to the DMRL synthase family.

The catalysed reaction is (2S)-2-hydroxy-3-oxobutyl phosphate + 5-amino-6-(D-ribitylamino)uracil = 6,7-dimethyl-8-(1-D-ribityl)lumazine + phosphate + 2 H2O + H(+). It functions in the pathway cofactor biosynthesis; riboflavin biosynthesis; riboflavin from 2-hydroxy-3-oxobutyl phosphate and 5-amino-6-(D-ribitylamino)uracil: step 1/2. Its function is as follows. Catalyzes the formation of 6,7-dimethyl-8-ribityllumazine by condensation of 5-amino-6-(D-ribitylamino)uracil with 3,4-dihydroxy-2-butanone 4-phosphate. This is the penultimate step in the biosynthesis of riboflavin. In Lactococcus lactis subsp. cremoris (strain MG1363), this protein is 6,7-dimethyl-8-ribityllumazine synthase.